A 205-amino-acid chain; its full sequence is Adenylate kinase (205 aa).

11-16 is a binding site for ATP; sequence GSGKGT. The NMP stretch occupies residues 31-60; the sequence is STGDIFRHNVKSMTPLGVEAKRYIDNGDFV. Residues Thr-32, Arg-37, 58-60, 86-89, and Gln-93 contribute to the AMP site; these read DFV and GYPR. Residues 127–137 are LID; sequence KRAEIEGRADD. Arg-128 contacts ATP. Residues Arg-134 and Arg-145 each coordinate AMP. Gly-173 contributes to the ATP binding site.

Belongs to the adenylate kinase family. In terms of assembly, monomer.

Its subcellular location is the cytoplasm. The enzyme catalyses AMP + ATP = 2 ADP. It functions in the pathway purine metabolism; AMP biosynthesis via salvage pathway; AMP from ADP: step 1/1. Functionally, catalyzes the reversible transfer of the terminal phosphate group between ATP and AMP. Plays an important role in cellular energy homeostasis and in adenine nucleotide metabolism. In Micrococcus luteus (strain ATCC 4698 / DSM 20030 / JCM 1464 / CCM 169 / CCUG 5858 / IAM 1056 / NBRC 3333 / NCIMB 9278 / NCTC 2665 / VKM Ac-2230) (Micrococcus lysodeikticus), this protein is Adenylate kinase.